The chain runs to 250 residues: MSDKPTETVSVSESVATPAVAATEPAPSLPVVNPSSLPSGFEWWRQTMAYKTGFMSAEESVQYEQDRLIKERYAECLSCEKNKQWVMAYSPTVRFMKDQIEKIGGDISSNNVFCDHCDDFKAGGFHPKYGILVCQNHVKSRSHLEDTLAHEMVHYYDNTKFKVDWMNLKHHACSEIRASTLSGECRMMNELMKGKLARLTRGHQECAKRRAILSVMANPGCKDEAQATQVVNEVWDSCFNDTRPFDTIYR.

His-150 is an a divalent metal cation binding site. Glu-151 is a catalytic residue. His-154 provides a ligand contact to a divalent metal cation.

This sequence belongs to the peptidase M76 family.

The protein localises to the mitochondrion inner membrane. Has a dual role in the assembly of mitochondrial ATPase. Acts as a protease that removes N-terminal residues of mitochondrial ATPase CF(0) subunit 6 at the intermembrane space side. Also involved in the correct assembly of the membrane-embedded ATPase CF(0) particle, probably mediating association of subunit 6 with the subunit 9 ring. The sequence is that of Mitochondrial inner membrane protease ATP23 (ATP23) from Yarrowia lipolytica (strain CLIB 122 / E 150) (Yeast).